We begin with the raw amino-acid sequence, 110 residues long: Large ribosomal subunit protein uL22 (110 aa).

It belongs to the universal ribosomal protein uL22 family. In terms of assembly, part of the 50S ribosomal subunit.

In terms of biological role, this protein binds specifically to 23S rRNA; its binding is stimulated by other ribosomal proteins, e.g. L4, L17, and L20. It is important during the early stages of 50S assembly. It makes multiple contacts with different domains of the 23S rRNA in the assembled 50S subunit and ribosome. Its function is as follows. The globular domain of the protein is located near the polypeptide exit tunnel on the outside of the subunit, while an extended beta-hairpin is found that lines the wall of the exit tunnel in the center of the 70S ribosome. In Aliivibrio fischeri (strain MJ11) (Vibrio fischeri), this protein is Large ribosomal subunit protein uL22.